The following is a 165-amino-acid chain: Methylated-DNA--protein-cysteine methyltransferase (165 aa).

The active-site Nucleophile; methyl group acceptor is the C126.

This sequence belongs to the MGMT family.

The protein resides in the cytoplasm. The enzyme catalyses a 6-O-methyl-2'-deoxyguanosine in DNA + L-cysteinyl-[protein] = S-methyl-L-cysteinyl-[protein] + a 2'-deoxyguanosine in DNA. The catalysed reaction is a 4-O-methyl-thymidine in DNA + L-cysteinyl-[protein] = a thymidine in DNA + S-methyl-L-cysteinyl-[protein]. Functionally, involved in the cellular defense against the biological effects of O6-methylguanine (O6-MeG) and O4-methylthymine (O4-MeT) in DNA. Repairs the methylated nucleobase in DNA by stoichiometrically transferring the methyl group to a cysteine residue in the enzyme. This is a suicide reaction: the enzyme is irreversibly inactivated. The polypeptide is Methylated-DNA--protein-cysteine methyltransferase (Mycobacterium leprae (strain TN)).